A 77-amino-acid polypeptide reads, in one-letter code: Teretoxin Tan15.2 (77 aa).

Residues M1 to N21 form the signal peptide. The propeptide occupies S22 to R40.

Post-translationally, contains 4 disulfide bonds. In terms of tissue distribution, expressed by the venom duct.

Its subcellular location is the secreted. The chain is Teretoxin Tan15.2 from Terebra anilis (Auger snail).